Reading from the N-terminus, the 229-residue chain is Flavin-dependent thymidylate synthase (229 aa).

Residues 1-217 enclose the ThyX domain; sequence MEFKVLDKGF…PWTFESFLKF (217 aa). FAD-binding positions include threonine 55, 78–80, and glutamate 86; that span reads RHR. DUMP is bound by residues 75–78, 86–90, and arginine 156; these read QWFR and EASLR. The ThyX motif motif lies at 78-88; sequence RHRIGSFNEAS. FAD contacts are provided by residues 172–174 and asparagine 178; that span reads NAR. Arginine 183 provides a ligand contact to dUMP. Arginine 183 serves as the catalytic Involved in ionization of N3 of dUMP, leading to its activation.

The protein belongs to the thymidylate synthase ThyX family. Homotetramer. Requires FAD as cofactor.

It catalyses the reaction dUMP + (6R)-5,10-methylene-5,6,7,8-tetrahydrofolate + NADPH + H(+) = dTMP + (6S)-5,6,7,8-tetrahydrofolate + NADP(+). The protein operates within pyrimidine metabolism; dTTP biosynthesis. Functionally, catalyzes the reductive methylation of 2'-deoxyuridine-5'-monophosphate (dUMP) to 2'-deoxythymidine-5'-monophosphate (dTMP) while utilizing 5,10-methylenetetrahydrofolate (mTHF) as the methyl donor, and NADPH and FADH(2) as the reductant. This is Flavin-dependent thymidylate synthase from Thermosipho melanesiensis (strain DSM 12029 / CIP 104789 / BI429).